A 128-amino-acid polypeptide reads, in one-letter code: Large ribosomal subunit protein bL12 (128 aa).

The protein belongs to the bacterial ribosomal protein bL12 family. As to quaternary structure, homodimer. Part of the ribosomal stalk of the 50S ribosomal subunit. Forms a multimeric L10(L12)X complex, where L10 forms an elongated spine to which 2 to 4 L12 dimers bind in a sequential fashion. Binds GTP-bound translation factors.

In terms of biological role, forms part of the ribosomal stalk which helps the ribosome interact with GTP-bound translation factors. Is thus essential for accurate translation. The protein is Large ribosomal subunit protein bL12 of Corynebacterium glutamicum (strain R).